The chain runs to 447 residues: Argininosuccinate synthase (447 aa).

ATP is bound by residues 17-25 and Ala43; that span reads AFSGGLDTS. L-citrulline is bound at residue Tyr99. 2 residues coordinate ATP: Gly129 and Thr131. Thr131, Asn135, and Asp136 together coordinate L-aspartate. Asn135 serves as a coordination point for L-citrulline. Position 136 (Asp136) interacts with ATP. L-citrulline contacts are provided by Arg139 and Ser192. Asp194 provides a ligand contact to ATP. Residues Thr201, Glu203, and Glu280 each coordinate L-citrulline.

It belongs to the argininosuccinate synthase family. Type 2 subfamily. As to quaternary structure, homotetramer.

It localises to the cytoplasm. The enzyme catalyses L-citrulline + L-aspartate + ATP = 2-(N(omega)-L-arginino)succinate + AMP + diphosphate + H(+). Its pathway is amino-acid biosynthesis; L-arginine biosynthesis; L-arginine from L-ornithine and carbamoyl phosphate: step 2/3. The chain is Argininosuccinate synthase from Escherichia coli (strain K12 / MC4100 / BW2952).